Reading from the N-terminus, the 432-residue chain is uncharacterized protein (432 aa).

SIS domains follow at residues 105 to 244 and 277 to 422; these read WLTE…DLVS and CDKK…VDLP.

This is an uncharacterized protein from Saccharomyces cerevisiae (strain Lalvin EC1118 / Prise de mousse) (Baker's yeast).